The following is a 178-amino-acid chain: ATP synthase subunit delta (178 aa).

The protein belongs to the ATPase delta chain family. As to quaternary structure, F-type ATPases have 2 components, F(1) - the catalytic core - and F(0) - the membrane proton channel. F(1) has five subunits: alpha(3), beta(3), gamma(1), delta(1), epsilon(1). F(0) has three main subunits: a(1), b(2) and c(10-14). The alpha and beta chains form an alternating ring which encloses part of the gamma chain. F(1) is attached to F(0) by a central stalk formed by the gamma and epsilon chains, while a peripheral stalk is formed by the delta and b chains.

The protein resides in the cell inner membrane. In terms of biological role, f(1)F(0) ATP synthase produces ATP from ADP in the presence of a proton or sodium gradient. F-type ATPases consist of two structural domains, F(1) containing the extramembraneous catalytic core and F(0) containing the membrane proton channel, linked together by a central stalk and a peripheral stalk. During catalysis, ATP synthesis in the catalytic domain of F(1) is coupled via a rotary mechanism of the central stalk subunits to proton translocation. Its function is as follows. This protein is part of the stalk that links CF(0) to CF(1). It either transmits conformational changes from CF(0) to CF(1) or is implicated in proton conduction. This is ATP synthase subunit delta from Pseudomonas syringae pv. tomato (strain ATCC BAA-871 / DC3000).